Reading from the N-terminus, the 46-residue chain is Diuretic hormone (46 aa).

An Isoleucine amide modification is found at I46.

This sequence belongs to the sauvagine/corticotropin-releasing factor/urotensin I family.

Its subcellular location is the secreted. Regulation of fluid secretion. Stimulates primary urine secretion by Malpighian tubules and causes a dose-dependent stimulation of cAMP levels in the tubules. The polypeptide is Diuretic hormone (Locusta migratoria (Migratory locust)).